Consider the following 485-residue polypeptide: Glutamyl-tRNA(Gln) amidotransferase subunit A (485 aa).

Catalysis depends on charge relay system residues Lys-79 and Ser-154. Ser-178 (acyl-ester intermediate) is an active-site residue.

This sequence belongs to the amidase family. GatA subfamily. As to quaternary structure, heterotrimer of A, B and C subunits.

It catalyses the reaction L-glutamyl-tRNA(Gln) + L-glutamine + ATP + H2O = L-glutaminyl-tRNA(Gln) + L-glutamate + ADP + phosphate + H(+). Allows the formation of correctly charged Gln-tRNA(Gln) through the transamidation of misacylated Glu-tRNA(Gln) in organisms which lack glutaminyl-tRNA synthetase. The reaction takes place in the presence of glutamine and ATP through an activated gamma-phospho-Glu-tRNA(Gln). The protein is Glutamyl-tRNA(Gln) amidotransferase subunit A of Bacillus pumilus (strain SAFR-032).